The chain runs to 187 residues: MADEQNLDAQAQDQAAEAGAGDELTTRVQVLEEQLAAAQDQSLRVAADLQNVRRRAEQDVEKAHKFALEKFAGDLLPIIDSLERGLDLSNPDDESIRPMREGIELTLKMFQDTLKRYQLEAIDPHGQPFSADQHQAMAMQESADVEPNTVLKVFQKGYQLNGRLLRPAMVVVSKAPSPATPSINEQA.

Residues 1-22 (MADEQNLDAQAQDQAAEAGAGD) are disordered. Low complexity predominate over residues 7 to 22 (LDAQAQDQAAEAGAGD).

Belongs to the GrpE family. Homodimer.

The protein resides in the cytoplasm. Functionally, participates actively in the response to hyperosmotic and heat shock by preventing the aggregation of stress-denatured proteins, in association with DnaK and GrpE. It is the nucleotide exchange factor for DnaK and may function as a thermosensor. Unfolded proteins bind initially to DnaJ; upon interaction with the DnaJ-bound protein, DnaK hydrolyzes its bound ATP, resulting in the formation of a stable complex. GrpE releases ADP from DnaK; ATP binding to DnaK triggers the release of the substrate protein, thus completing the reaction cycle. Several rounds of ATP-dependent interactions between DnaJ, DnaK and GrpE are required for fully efficient folding. The sequence is that of Protein GrpE from Pseudomonas syringae pv. tomato (strain ATCC BAA-871 / DC3000).